Here is a 304-residue protein sequence, read N- to C-terminus: Serine/threonine-protein phosphatase PP1 isozyme 3 (304 aa).

Residues D61, H63, D89, and N121 each coordinate Mn(2+). H122 functions as the Proton donor in the catalytic mechanism. Mn(2+)-binding residues include H170 and H245.

The protein belongs to the PPP phosphatase family. PP-1 subfamily. Requires Mn(2+) as cofactor.

It catalyses the reaction O-phospho-L-seryl-[protein] + H2O = L-seryl-[protein] + phosphate. The enzyme catalyses O-phospho-L-threonyl-[protein] + H2O = L-threonyl-[protein] + phosphate. This chain is Serine/threonine-protein phosphatase PP1 isozyme 3 (NPP3), found in Nicotiana tabacum (Common tobacco).